Reading from the N-terminus, the 350-residue chain is 3-dehydroquinate synthase (350 aa).

NAD(+) contacts are provided by residues 63-68 (DGEEYK), 97-101 (GVIGD), 121-122 (TT), Lys-134, Lys-143, and 161-164 (FLKT). Glu-176, His-235, and His-252 together coordinate Zn(2+).

This sequence belongs to the sugar phosphate cyclases superfamily. Dehydroquinate synthase family. It depends on Co(2+) as a cofactor. The cofactor is Zn(2+). NAD(+) serves as cofactor.

The protein localises to the cytoplasm. It carries out the reaction 7-phospho-2-dehydro-3-deoxy-D-arabino-heptonate = 3-dehydroquinate + phosphate. Its pathway is metabolic intermediate biosynthesis; chorismate biosynthesis; chorismate from D-erythrose 4-phosphate and phosphoenolpyruvate: step 2/7. In terms of biological role, catalyzes the conversion of 3-deoxy-D-arabino-heptulosonate 7-phosphate (DAHP) to dehydroquinate (DHQ). This Sulfurovum sp. (strain NBC37-1) protein is 3-dehydroquinate synthase.